The following is a 68-amino-acid chain: Protein P33 (68 aa).

Residues 34–63 (IVNLQGRIAELEARETEMLARVDTLIARLA) are a coiled coil.

Assembly protein. In Acinetobacter calcoaceticus (Arthrobacter siderocapsulatus), this protein is Protein P33 (XXXIII).